The chain runs to 388 residues: S-adenosylmethionine synthase (388 aa).

ATP is bound at residue H17. D19 serves as a coordination point for Mg(2+). E45 contacts K(+). The L-methionine site is built by E58 and Q102. The interval 102–112 (QSVHIAQGVDA) is flexible loop. Residues 167-169 (DAK), D241, 247-248 (RK), A264, and K268 each bind ATP. D241 contributes to the L-methionine binding site. Residue K272 coordinates L-methionine.

The protein belongs to the AdoMet synthase family. Homotetramer; dimer of dimers. Mg(2+) is required as a cofactor. K(+) serves as cofactor.

The protein localises to the cytoplasm. The catalysed reaction is L-methionine + ATP + H2O = S-adenosyl-L-methionine + phosphate + diphosphate. It participates in amino-acid biosynthesis; S-adenosyl-L-methionine biosynthesis; S-adenosyl-L-methionine from L-methionine: step 1/1. Its function is as follows. Catalyzes the formation of S-adenosylmethionine (AdoMet) from methionine and ATP. The overall synthetic reaction is composed of two sequential steps, AdoMet formation and the subsequent tripolyphosphate hydrolysis which occurs prior to release of AdoMet from the enzyme. This is S-adenosylmethionine synthase from Maricaulis maris (strain MCS10) (Caulobacter maris).